We begin with the raw amino-acid sequence, 189 residues long: MKEDKKVLHVANMTNGLIVYPDYDYIVYFPSSYTAAGTPLYFPEFAVPIDLIKALLEEKKVIMYDATVHENKELTDAFLKGVPTFLMALNRAIHGTKGLFEKLEKGYKVCPWQTPDIVQHAVYRLPKHYYKFLKKCVKLFAPEKRGKLWISIPENVELVVEKIDRRLNDNYEEIAKMIKEKKSIHTYRV.

This is an uncharacterized protein from Aquifex aeolicus (strain VF5).